The sequence spans 182 residues: Putative colanic acid biosynthesis acetyltransferase WcaF (182 aa).

The protein belongs to the transferase hexapeptide repeat family.

It participates in slime biogenesis; slime polysaccharide biosynthesis. The polypeptide is Putative colanic acid biosynthesis acetyltransferase WcaF (wcaF) (Shigella flexneri).